The primary structure comprises 399 residues: S-adenosylmethionine synthase (399 aa).

His-17 serves as a coordination point for ATP. Asp-19 serves as a coordination point for Mg(2+). K(+) is bound at residue Glu-52. L-methionine-binding residues include Glu-65 and Gln-109. Residues 109 to 119 are flexible loop; it reads QSADIAQGVDA. Residues 177 to 179, 243 to 244, Asp-252, 258 to 259, Ala-275, and Lys-279 contribute to the ATP site; these read DSK, KF, and RK. Residue Asp-252 participates in L-methionine binding. Lys-283 is a binding site for L-methionine.

Belongs to the AdoMet synthase family. Homotetramer; dimer of dimers. The cofactor is Mg(2+). Requires K(+) as cofactor.

It is found in the cytoplasm. The catalysed reaction is L-methionine + ATP + H2O = S-adenosyl-L-methionine + phosphate + diphosphate. It functions in the pathway amino-acid biosynthesis; S-adenosyl-L-methionine biosynthesis; S-adenosyl-L-methionine from L-methionine: step 1/1. Functionally, catalyzes the formation of S-adenosylmethionine (AdoMet) from methionine and ATP. The overall synthetic reaction is composed of two sequential steps, AdoMet formation and the subsequent tripolyphosphate hydrolysis which occurs prior to release of AdoMet from the enzyme. In Bradyrhizobium sp. (strain ORS 278), this protein is S-adenosylmethionine synthase.